The sequence spans 394 residues: Ketoisovalerate oxidoreductase subunit VorA (394 aa).

As to quaternary structure, heterotetramer of one alpha, one beta, one delta and one gamma chain.

It catalyses the reaction 3-methyl-2-oxobutanoate + 2 oxidized [2Fe-2S]-[ferredoxin] + CoA = 2-methylpropanoyl-CoA + 2 reduced [2Fe-2S]-[ferredoxin] + CO2 + H(+). This Pyrococcus horikoshii (strain ATCC 700860 / DSM 12428 / JCM 9974 / NBRC 100139 / OT-3) protein is Ketoisovalerate oxidoreductase subunit VorA (vorA).